The primary structure comprises 287 residues: Nucleotide-binding protein Pmob_0154 (287 aa).

15-22 is an ATP binding site; the sequence is GLSGAGKT. 64 to 67 provides a ligand contact to GTP; that stretch reads DIRW.

It belongs to the RapZ-like family.

Its function is as follows. Displays ATPase and GTPase activities. The sequence is that of Nucleotide-binding protein Pmob_0154 from Petrotoga mobilis (strain DSM 10674 / SJ95).